Here is a 580-residue protein sequence, read N- to C-terminus: Glypican-3 (580 aa).

A signal peptide spans 1–24; that stretch reads MAGTVRTACLVVAMLLSLDFPGQA. Glutamine 25 carries the post-translational modification Pyrrolidone carboxylic acid. 7 disulfide bridges follow: cysteine 35–cysteine 72, cysteine 65–cysteine 262, cysteine 73–cysteine 265, cysteine 197–cysteine 349, cysteine 252–cysteine 285, cysteine 274–cysteine 422, and cysteine 278–cysteine 410. 2 N-linked (GlcNAc...) asparagine glycosylation sites follow: asparagine 124 and asparagine 241. Serine 352 is modified (phosphoserine). N-linked (GlcNAc...) asparagine glycosylation occurs at asparagine 418. Residues serine 495 and serine 509 are each glycosylated (O-linked (Xyl...) (glycosaminoglycan) serine). Asparagine 554 is lipidated: GPI-anchor amidated asparagine. Positions 555–580 are cleaved as a propeptide — removed in mature form; that stretch reads LGNVHSPLKLLTSMAISVVCFFFLVH.

This sequence belongs to the glypican family. Heterodimer; disulfide-linked. Cleavage by a furin-like convertase results in production of alpha and beta chains which form a disulfide-linked heterodimer. Interacts with DPP4. Interacts with FGF2. Interacts with WNT5A. Also interacts with WNT3A and WNT7B. Interacts with hedgehog protein SHH; the heparan sulfate chains are not required for the interaction. Also interacts with hedgehog protein IHH. Interacts with CD81. Interacts with Wnt receptors FZD4, FZD7 and FZD8; the heparan sulfate chains are required for the interaction. O-glycosylated; contains heparan sulfate and/or chondroitin sulfate. Post-translationally, cleaved intracellularly by a furin-like convertase to generate 2 subunits, alpha and beta, which remain associated through disulfide bonds and are associated with the cell surface via the GPI-anchor. This processing is essential for its role in inhibition of hedgehog signaling. A second proteolytic event may result in cleavage of the protein on the cell surface, separating it from the GPI-anchor and leading to its shedding from the cell surface.

The protein localises to the cell membrane. In terms of biological role, cell surface proteoglycan. Negatively regulates the hedgehog signaling pathway when attached via the GPI-anchor to the cell surface by competing with the hedgehog receptor PTC1 for binding to hedgehog proteins. Binding to the hedgehog protein SHH triggers internalization of the complex by endocytosis and its subsequent lysosomal degradation. Positively regulates the canonical Wnt signaling pathway by binding to the Wnt receptor Frizzled and stimulating the binding of the Frizzled receptor to Wnt ligands. Positively regulates the non-canonical Wnt signaling pathway. Binds to CD81 which decreases the availability of free CD81 for binding to the transcriptional repressor HHEX, resulting in nuclear translocation of HHEX and transcriptional repression. Inhibits the dipeptidyl peptidase activity of DPP4. Plays a role in limb patterning and skeletal development by controlling the cellular response to BMP4. Modulates the effects of growth factors BMP2, BMP7 and FGF7 on renal branching morphogenesis. Required for coronary vascular development. Plays a role in regulating cell movements during gastrulation. In Pan troglodytes (Chimpanzee), this protein is Glypican-3 (GPC3).